Here is a 588-residue protein sequence, read N- to C-terminus: Probable metalloprotease ARX1 (588 aa).

It belongs to the peptidase M24 family. Component of the nucleoplasmic and cytoplasmic pre-60S ribosomal particles.

The protein localises to the cytoplasm. The protein resides in the nucleus. Probable metalloprotease involved in proper assembly of pre-ribosomal particles during the biogenesis of the 60S ribosomal subunit. Accompanies the pre-60S particles to the cytoplasm. The sequence is that of Probable metalloprotease ARX1 (ARX1) from Candida glabrata (strain ATCC 2001 / BCRC 20586 / JCM 3761 / NBRC 0622 / NRRL Y-65 / CBS 138) (Yeast).